Reading from the N-terminus, the 558-residue chain is Factor VII-activating protease (558 aa).

Positions 1 to 23 (MSVVMLVFRVLLLIALVGNSAIG) are cleaved as a signal peptide. EGF-like domains are found at residues 71–107 (DDDP…SRCQ), 109–146 (VQNK…PDCS), and 148–186 (VLPV…RFCE). Cystine bridges form between Cys-75–Cys-86, Cys-80–Cys-95, Cys-97–Cys-106, Cys-113–Cys-123, Cys-118–Cys-134, Cys-136–Cys-145, Cys-152–Cys-163, Cys-157–Cys-174, Cys-176–Cys-185, Cys-192–Cys-274, Cys-213–Cys-255, Cys-244–Cys-269, Cys-299–Cys-433, Cys-345–Cys-361, Cys-353–Cys-422, Cys-445–Cys-513, Cys-475–Cys-491, and Cys-503–Cys-531. The 84-residue stretch at 191–274 (DCYVGDGYSY…KWEYCNVEVC (84 aa)) folds into the Kringle domain. The Peptidase S1 domain maps to 312–553 (IYGGFKSTAG…FLNWIKTTMH (242 aa)). Catalysis depends on charge relay system residues His-360 and Asp-409. Ser-507 (charge relay system) is an active-site residue.

It belongs to the peptidase S1 family. As to quaternary structure, heterodimer; disulfide-linked. Heterodimer of a 50 kDa heavy and a 27 kDa light chain linked by a disulfide bond. In terms of processing, proteolytic cleavage at Gly-23 or Met-27 can give rise to the 50 kDa heavy chain (HC) and cleavage at Arg-311 or Lys-317 can give rise to the 27 kDa light chain (LC). The HC can undergo further proteolytic cleavage giving rise to a 26 kDa fragment. The LC can undergo further proteolytic cleavage at Arg-311 leading to a 17-kDa fragment and at Arg-478 leading to a 8-kDa fragment.

Its subcellular location is the secreted. Functionally, cleaves the alpha-chain at multiple sites and the beta-chain between 'Lys-53' and 'Lys-54' but not the gamma-chain of fibrinogen and therefore does not initiate the formation of the fibrin clot and does not cause the fibrinolysis directly. It does not cleave (activate) prothrombin and plasminogen but converts the inactive single chain urinary plasminogen activator (pro-urokinase) to the active two chain form. Activates coagulation factor VII. May function as a tumor suppressor negatively regulating cell proliferation and cell migration. The polypeptide is Factor VII-activating protease (Rattus norvegicus (Rat)).